A 306-amino-acid polypeptide reads, in one-letter code: Homeobox protein Hox-C13a (306 aa).

The segment at 68 to 90 (SVYSDISSPDTGRQCPAPQTSSS) is disordered. The homeobox DNA-binding region spans 236–295 (GRKKRVPYTKLQLKELEKEYAASKFITKDKRRRISAATNLSERQVTIWFQNRRVKEKKFI).

The protein belongs to the Abd-B homeobox family.

The protein resides in the nucleus. In terms of biological role, sequence-specific transcription factor which is part of a developmental regulatory system that provides cells with specific positional identities on the anterior-posterior axis. This is Homeobox protein Hox-C13a (hoxc13a) from Takifugu rubripes (Japanese pufferfish).